Here is a 232-residue protein sequence, read N- to C-terminus: MIPWLSSDSLFPPLHTALIQPNGLLAVGGDLSPRRLIEAYSQGIFPWFNDGDPILWWSPDPRMVLFPRELKVSRSLQKSLRKGNYEIRTDRNFTPVMRACAAPRRDSCGTWIQNKMIFAYSALHEMGFAHSVETWMDGELVGGLYGVALGRVFFGESMFSRVSNASKIAFVHLVRQLERWGFEMIDCQMKTAHLASLGAREIPREEFSQRLKELVNYMERGEKWCFDHEQVE.

Belongs to the L/F-transferase family.

It is found in the cytoplasm. It carries out the reaction N-terminal L-lysyl-[protein] + L-leucyl-tRNA(Leu) = N-terminal L-leucyl-L-lysyl-[protein] + tRNA(Leu) + H(+). The catalysed reaction is N-terminal L-arginyl-[protein] + L-leucyl-tRNA(Leu) = N-terminal L-leucyl-L-arginyl-[protein] + tRNA(Leu) + H(+). It catalyses the reaction L-phenylalanyl-tRNA(Phe) + an N-terminal L-alpha-aminoacyl-[protein] = an N-terminal L-phenylalanyl-L-alpha-aminoacyl-[protein] + tRNA(Phe). Functionally, functions in the N-end rule pathway of protein degradation where it conjugates Leu, Phe and, less efficiently, Met from aminoacyl-tRNAs to the N-termini of proteins containing an N-terminal arginine or lysine. In Nitrosospira multiformis (strain ATCC 25196 / NCIMB 11849 / C 71), this protein is Leucyl/phenylalanyl-tRNA--protein transferase.